The following is a 194-amino-acid chain: Histone H1 (194 aa).

Alanine 1 bears the N-acetylalanine; partial mark. Residues alanine 1 to lysine 14 are compositionally biased toward low complexity. Disordered stretches follow at residues alanine 1–valine 31 and alanine 105–lysine 194. Over residues alanine 15–lysine 26 the composition is skewed to basic residues. An H15 domain is found at serine 27 to lysine 100. Positions lysine 116–lysine 194 are enriched in basic residues. 3 positions are modified to phosphoserine: serine 145, serine 161, and serine 182.

The protein belongs to the histone H1/H5 family.

The protein resides in the nucleus. It localises to the chromosome. Histones H1 are necessary for the condensation of nucleosome chains into higher-order structures. The polypeptide is Histone H1 (Salmo trutta (Brown trout)).